A 62-amino-acid polypeptide reads, in one-letter code: Photosystem II reaction center protein Z (62 aa).

The next 2 membrane-spanning stretches (helical) occupy residues 8-28 (LVLL…VVLA) and 41-61 (YTGA…NSLV).

This sequence belongs to the PsbZ family. PSII is composed of 1 copy each of membrane proteins PsbA, PsbB, PsbC, PsbD, PsbE, PsbF, PsbH, PsbI, PsbJ, PsbK, PsbL, PsbM, PsbT, PsbX, PsbY, PsbZ, Psb30/Ycf12, at least 3 peripheral proteins of the oxygen-evolving complex and a large number of cofactors. It forms dimeric complexes.

It is found in the plastid. It localises to the chloroplast thylakoid membrane. Functionally, may control the interaction of photosystem II (PSII) cores with the light-harvesting antenna, regulates electron flow through the 2 photosystem reaction centers. PSII is a light-driven water plastoquinone oxidoreductase, using light energy to abstract electrons from H(2)O, generating a proton gradient subsequently used for ATP formation. The polypeptide is Photosystem II reaction center protein Z (Pyropia yezoensis (Susabi-nori)).